Here is a 111-residue protein sequence, read N- to C-terminus: Phosphoribosyl-ATP pyrophosphatase (111 aa).

It belongs to the PRA-PH family.

The protein localises to the cytoplasm. It carries out the reaction 1-(5-phospho-beta-D-ribosyl)-ATP + H2O = 1-(5-phospho-beta-D-ribosyl)-5'-AMP + diphosphate + H(+). Its pathway is amino-acid biosynthesis; L-histidine biosynthesis; L-histidine from 5-phospho-alpha-D-ribose 1-diphosphate: step 2/9. The polypeptide is Phosphoribosyl-ATP pyrophosphatase (Pseudomonas putida (strain ATCC 700007 / DSM 6899 / JCM 31910 / BCRC 17059 / LMG 24140 / F1)).